A 224-amino-acid chain; its full sequence is GTP cyclohydrolase 1 (224 aa).

The tract at residues 1–20 is disordered; sequence MKQEKTVSPTVENNRSAESR. The Zn(2+) site is built by cysteine 114, histidine 117, and cysteine 185.

Belongs to the GTP cyclohydrolase I family. In terms of assembly, toroid-shaped homodecamer, composed of two pentamers of five dimers.

The enzyme catalyses GTP + H2O = 7,8-dihydroneopterin 3'-triphosphate + formate + H(+). Its pathway is cofactor biosynthesis; 7,8-dihydroneopterin triphosphate biosynthesis; 7,8-dihydroneopterin triphosphate from GTP: step 1/1. The polypeptide is GTP cyclohydrolase 1 (Chlorobaculum tepidum (strain ATCC 49652 / DSM 12025 / NBRC 103806 / TLS) (Chlorobium tepidum)).